We begin with the raw amino-acid sequence, 136 residues long: Small ribosomal subunit protein uS19 (136 aa).

It belongs to the universal ribosomal protein uS19 family.

Its function is as follows. Protein S19 forms a complex with S13 that binds strongly to the 16S ribosomal RNA. The protein is Small ribosomal subunit protein uS19 of Methanosphaera stadtmanae (strain ATCC 43021 / DSM 3091 / JCM 11832 / MCB-3).